The primary structure comprises 289 residues: 7-methylguanosine phosphate-specific 5'-nucleotidase (289 aa).

Catalysis depends on D38, which acts as the Nucleophile. Mg(2+) contacts are provided by D38 and D40. D40 acts as the Proton donor in catalysis. A CMP-binding site is contributed by E85. N(7)-methyl-GMP is bound at residue E85. Substrate is bound by residues 153 to 154 (SA) and K202. Position 227 (D227) interacts with Mg(2+).

Belongs to the pyrimidine 5'-nucleotidase family. In terms of assembly, monomer.

It localises to the cytoplasm. The enzyme catalyses N(7)-methyl-GMP + H2O = N(7)-methylguanosine + phosphate. The catalysed reaction is CMP + H2O = cytidine + phosphate. It carries out the reaction a ribonucleoside 5'-phosphate + H2O = a ribonucleoside + phosphate. Its function is as follows. Specifically hydrolyzes 7-methylguanosine monophosphate (m(7)GMP) to 7-methylguanosine and inorganic phosphate. The specific activity for m(7)GMP may protect cells against undesired salvage of m(7)GMP and its incorporation into nucleic acids. Also has weak activity for CMP. UMP and purine nucleotides are poor substrates. This Gallus gallus (Chicken) protein is 7-methylguanosine phosphate-specific 5'-nucleotidase (NT5C3B).